We begin with the raw amino-acid sequence, 699 residues long: Catalase-peroxidase (699 aa).

Residues 72–200 (WHSAGTYRIA…LAAVMMGLIY (129 aa)) constitute a cross-link (tryptophyl-tyrosyl-methioninium (Trp-Tyr) (with M-226)). The Proton acceptor role is filled by H73. Residues 200–226 (YVNPEGVDGNPDPLKTAKDMRVTFARM) constitute a cross-link (tryptophyl-tyrosyl-methioninium (Tyr-Met) (with W-72)). A heme b-binding site is contributed by H241.

This sequence belongs to the peroxidase family. Peroxidase/catalase subfamily. As to quaternary structure, homodimer or homotetramer. Heme b is required as a cofactor. Formation of the three residue Trp-Tyr-Met cross-link is important for the catalase, but not the peroxidase activity of the enzyme.

It carries out the reaction H2O2 + AH2 = A + 2 H2O. It catalyses the reaction 2 H2O2 = O2 + 2 H2O. Bifunctional enzyme with both catalase and broad-spectrum peroxidase activity. The chain is Catalase-peroxidase from Aeromonas salmonicida (strain A449).